The primary structure comprises 108 residues: Thiosulfate sulfurtransferase GlpE (108 aa).

Residues 17–105 (VSQSAILVDV…WLREFPQAIT (89 aa)) enclose the Rhodanese domain. Cys-65 serves as the catalytic Cysteine persulfide intermediate.

Belongs to the GlpE family.

It localises to the cytoplasm. The catalysed reaction is thiosulfate + hydrogen cyanide = thiocyanate + sulfite + 2 H(+). The enzyme catalyses thiosulfate + [thioredoxin]-dithiol = [thioredoxin]-disulfide + hydrogen sulfide + sulfite + 2 H(+). Its function is as follows. Transferase that catalyzes the transfer of sulfur from thiosulfate to thiophilic acceptors such as cyanide or dithiols. May function in a CysM-independent thiosulfate assimilation pathway by catalyzing the conversion of thiosulfate to sulfite, which can then be used for L-cysteine biosynthesis. The sequence is that of Thiosulfate sulfurtransferase GlpE from Proteus mirabilis (strain HI4320).